The primary structure comprises 344 residues: Intraflagellar transport protein 46 (344 aa).

A compositionally biased stretch (acidic residues) spans 1-16; that stretch reads MDDSMDYPDRDGDDLD. Residues 1 to 100 form a disordered region; it reads MDDSMDYPDR…IANSDEAPPG (100 aa). Polar residues predominate over residues 18–30; that stretch reads FQGTARSQVVQNQ.

The protein belongs to the IFT46 family. Component of the IFT complex B, the core composed of IFT25, IFT27, IFT46, IFT52, IFT74, IFT81 and IFT88 as well as associated subunits IFT20, IFT57, IFT80 and IFT172. Interacts with IFT25, IFT52, IFT70, IFT88 and DAW1.

The protein localises to the cytoplasm. The protein resides in the cytoskeleton. It localises to the cilium basal body. Its subcellular location is the cell projection. It is found in the cilium. Forms part of a complex involved in intraflagellar transport (IFT), the bi-directional movement of particles required for the assembly, maintenance and functioning of primary cilia. Plays a role in maintaining IFT complex B stability. In Chlamydomonas reinhardtii (Chlamydomonas smithii), this protein is Intraflagellar transport protein 46.